Reading from the N-terminus, the 287-residue chain is MAGAKEIRSKIASVQNTQKITKAMEMVAASKMRKTQERMASSRPYAETMRKVIGHLALGNLEYKHSYLDERDVKRVGYLVVATDRGLAGGLNINLFKKLLADMKEWNGKGVETELALIGSKAVSFFNSVGSKVVAQVTGMGDNPMLSELIGPVKVMLQAYDEGRLDKLYIVSNKFVNTMSQVPQILQILPLPPAEEADLKIKSWDYLYEPDPKTLLDTLLRRYVESQVYQGVVENLASEQAARMVAMKAATDNGGSLIKELQLVYNKARQTSITQELTEIVSGAAAV.

Belongs to the ATPase gamma chain family. F-type ATPases have 2 components, CF(1) - the catalytic core - and CF(0) - the membrane proton channel. CF(1) has five subunits: alpha(3), beta(3), gamma(1), delta(1), epsilon(1). CF(0) has three main subunits: a, b and c.

It is found in the cell inner membrane. Its function is as follows. Produces ATP from ADP in the presence of a proton gradient across the membrane. The gamma chain is believed to be important in regulating ATPase activity and the flow of protons through the CF(0) complex. This chain is ATP synthase gamma chain, found in Sodalis glossinidius (strain morsitans).